Here is a 441-residue protein sequence, read N- to C-terminus: Homoserine dehydrogenase (441 aa).

2 residues coordinate NADP(+): Asn17 and Val18. The NAD(+) site is built by Val18 and Gly47. Position 18 (Val18) interacts with NADPH. The NADP(+) site is built by Arg49, Arg50, and Lys107. Arg49 contributes to the NADPH binding site. Lys107 contacts NADPH. Residues Glu131, Val134, Gly136, and Ile138 each contribute to the Na(+) site. Positions 189 and 192 each coordinate NADP(+). Residues Glu192 and Asp203 each contribute to the L-homoserine site. Residue Lys207 is the Proton donor of the active site. NADP(+) is bound at residue Gly309. Gly309 contributes to the NAD(+) binding site. Gly309 serves as a coordination point for NADPH. Residues 356-435 (YVSMNVADKP…VVQGVTSVLR (80 aa)) enclose the ACT domain.

It belongs to the homoserine dehydrogenase family. The cofactor is a metal cation.

It catalyses the reaction L-homoserine + NADP(+) = L-aspartate 4-semialdehyde + NADPH + H(+). The enzyme catalyses L-homoserine + NAD(+) = L-aspartate 4-semialdehyde + NADH + H(+). It functions in the pathway amino-acid biosynthesis; L-methionine biosynthesis via de novo pathway; L-homoserine from L-aspartate: step 3/3. Its pathway is amino-acid biosynthesis; L-threonine biosynthesis; L-threonine from L-aspartate: step 3/5. Its function is as follows. Catalyzes the conversion of L-aspartate-beta-semialdehyde (L-Asa) to L-homoserine (L-Hse), the third step in the biosynthesis of threonine and methionine from aspartate. This Mycobacterium leprae (strain TN) protein is Homoserine dehydrogenase (hom).